Consider the following 419-residue polypeptide: UDP-N-acetylglucosamine 1-carboxyvinyltransferase 2 (419 aa).

Residue 24 to 25 coordinates phosphoenolpyruvate; that stretch reads KN. Arg94 is a UDP-N-acetyl-alpha-D-glucosamine binding site. Cys118 functions as the Proton donor in the catalytic mechanism. The residue at position 118 (Cys118) is a 2-(S-cysteinyl)pyruvic acid O-phosphothioketal. UDP-N-acetyl-alpha-D-glucosamine-binding positions include 123–127, Asp307, and Ile329; that span reads RPIDQ.

The protein belongs to the EPSP synthase family. MurA subfamily.

The protein resides in the cytoplasm. It catalyses the reaction phosphoenolpyruvate + UDP-N-acetyl-alpha-D-glucosamine = UDP-N-acetyl-3-O-(1-carboxyvinyl)-alpha-D-glucosamine + phosphate. It participates in cell wall biogenesis; peptidoglycan biosynthesis. In terms of biological role, cell wall formation. Adds enolpyruvyl to UDP-N-acetylglucosamine. The sequence is that of UDP-N-acetylglucosamine 1-carboxyvinyltransferase 2 from Staphylococcus aureus (strain bovine RF122 / ET3-1).